The chain runs to 155 residues: Nodulin-related protein 2 (155 aa).

Met1 is subject to N-acetylmethionine. Disordered stretches follow at residues 1-37 (MNFI…PATN) and 85-155 (DEKS…GFLK). Basic and acidic residues predominate over residues 95–106 (DKAEKYLNDYES). The span at 120-130 (SQAEPASQPEP) shows a compositional bias: low complexity.

As to quaternary structure, interacts with DEK3.

In terms of biological role, may be a negative regulator of the ABA signaling/synthesis pathway. This is Nodulin-related protein 2 from Arabidopsis thaliana (Mouse-ear cress).